The following is a 611-amino-acid chain: Threonine--tRNA ligase (611 aa).

A catalytic region spans residues 209–502 (DHRRLGKDLE…MTENYAGDFP (294 aa)). Residues Cys302, His353, and His479 each contribute to the Zn(2+) site.

This sequence belongs to the class-II aminoacyl-tRNA synthetase family. As to quaternary structure, homodimer. Requires Zn(2+) as cofactor.

It is found in the cytoplasm. The enzyme catalyses tRNA(Thr) + L-threonine + ATP = L-threonyl-tRNA(Thr) + AMP + diphosphate + H(+). Catalyzes the attachment of threonine to tRNA(Thr) in a two-step reaction: L-threonine is first activated by ATP to form Thr-AMP and then transferred to the acceptor end of tRNA(Thr). Also edits incorrectly charged L-seryl-tRNA(Thr). In Synechococcus sp. (strain CC9902), this protein is Threonine--tRNA ligase.